The sequence spans 479 residues: UDP-N-acetylmuramoyl-L-alanyl-D-glutamate--2,6-diaminopimelate ligase (479 aa).

Ser-21 contributes to the UDP-N-acetyl-alpha-D-muramoyl-L-alanyl-D-glutamate binding site. ATP is bound at residue 98-104 (GTNGKSS). UDP-N-acetyl-alpha-D-muramoyl-L-alanyl-D-glutamate is bound by residues 144–145 (TT), Ser-171, Gln-177, and Arg-179. Lys-211 is modified (N6-carboxylysine). Meso-2,6-diaminopimelate is bound by residues Arg-372, 396 to 399 (DNPR), Gly-446, and Glu-450. The short motif at 396–399 (DNPR) is the Meso-diaminopimelate recognition motif element.

Belongs to the MurCDEF family. MurE subfamily. Mg(2+) is required as a cofactor. Post-translationally, carboxylation is probably crucial for Mg(2+) binding and, consequently, for the gamma-phosphate positioning of ATP.

The protein resides in the cytoplasm. It catalyses the reaction UDP-N-acetyl-alpha-D-muramoyl-L-alanyl-D-glutamate + meso-2,6-diaminopimelate + ATP = UDP-N-acetyl-alpha-D-muramoyl-L-alanyl-gamma-D-glutamyl-meso-2,6-diaminopimelate + ADP + phosphate + H(+). It functions in the pathway cell wall biogenesis; peptidoglycan biosynthesis. Catalyzes the addition of meso-diaminopimelic acid to the nucleotide precursor UDP-N-acetylmuramoyl-L-alanyl-D-glutamate (UMAG) in the biosynthesis of bacterial cell-wall peptidoglycan. The chain is UDP-N-acetylmuramoyl-L-alanyl-D-glutamate--2,6-diaminopimelate ligase from Rickettsia rickettsii.